The sequence spans 512 residues: Glutathione-binding protein GsiB (512 aa).

An N-terminal signal peptide occupies residues 1–26; sequence MARAVHRSGLVALGIATALMASCAFA.

It belongs to the bacterial solute-binding protein 5 family. The complex is composed of two ATP-binding proteins (GsiA), two transmembrane proteins (GsiC and GsiD) and a solute-binding protein (GsiB).

It localises to the periplasm. In terms of biological role, part of the ABC transporter complex GsiABCD involved in glutathione import. Binds glutathione. The protein is Glutathione-binding protein GsiB of Escherichia coli O6:K15:H31 (strain 536 / UPEC).